Consider the following 419-residue polypeptide: L-rhamnose isomerase (419 aa).

H262, D294, and D296 together coordinate Mn(2+).

Belongs to the rhamnose isomerase family. Homotetramer. Mn(2+) serves as cofactor.

The protein localises to the cytoplasm. It carries out the reaction L-rhamnopyranose = L-rhamnulose. The protein operates within carbohydrate degradation; L-rhamnose degradation; glycerone phosphate from L-rhamnose: step 1/3. Functionally, catalyzes the interconversion of L-rhamnose and L-rhamnulose. The sequence is that of L-rhamnose isomerase from Salmonella paratyphi A (strain AKU_12601).